A 410-amino-acid chain; its full sequence is Peptidase T (410 aa).

Histidine 78 lines the Zn(2+) pocket. The active site involves aspartate 80. A Zn(2+)-binding site is contributed by aspartate 140. The Proton acceptor role is filled by glutamate 174. Glutamate 175, aspartate 197, and histidine 379 together coordinate Zn(2+).

Belongs to the peptidase M20B family. Zn(2+) is required as a cofactor.

The protein localises to the cytoplasm. It carries out the reaction Release of the N-terminal residue from a tripeptide.. In terms of biological role, cleaves the N-terminal amino acid of tripeptides. This is Peptidase T from Staphylococcus saprophyticus subsp. saprophyticus (strain ATCC 15305 / DSM 20229 / NCIMB 8711 / NCTC 7292 / S-41).